The sequence spans 98 residues: Integration host factor subunit alpha (98 aa).

The tract at residues F49–I71 is disordered.

It belongs to the bacterial histone-like protein family. As to quaternary structure, heterodimer of an alpha and a beta chain.

In terms of biological role, this protein is one of the two subunits of integration host factor, a specific DNA-binding protein that functions in genetic recombination as well as in transcriptional and translational control. The polypeptide is Integration host factor subunit alpha (Shewanella sp. (strain ANA-3)).